Reading from the N-terminus, the 299-residue chain is Taste receptor type 2 member 5 (299 aa).

A topological domain (extracellular) is located at residue Met-1. A helical transmembrane segment spans residues 2-22 (LSAGLGLLMLVAVVEFLIGLI). Over 23 to 45 (GNGVLVVWSFREWMRKFNWSSYN) the chain is Cytoplasmic. The chain crosses the membrane as a helical span at residues 46–66 (LIILGLAGCRFLLQWLIILDL). Residues 67–82 (SLFPLFQSSRWLRYLS) lie on the Extracellular side of the membrane. Residues 83–103 (IFWVLVSQASLWFATFLSVFY) form a helical membrane-spanning segment. Over 104–127 (CKKITTFDRPAYLWLKQRAYNLSL) the chain is Cytoplasmic. A helical membrane pass occupies residues 128–148 (WCLLGYFIINLLLTVQIGLMF). Residues 149-175 (YHPPQGNSSIRYPFESWQYLYAFRLNS) are Extracellular-facing. Asn-155 carries N-linked (GlcNAc...) asparagine glycosylation. The chain crosses the membrane as a helical span at residues 176-196 (GSYLPLMVFLVSSGMLIVSLY). The Cytoplasmic portion of the chain corresponds to 197–223 (THHKKMKVHSAGRRDVRAKAHITALKS). Residues 224 to 244 (LGCFLFLHLVYIMASPFSITS) traverse the membrane as a helical segment. At 245 to 253 (KTYPPDLTS) the chain is on the extracellular side. The chain crosses the membrane as a helical span at residues 254-274 (VFIWETLMAAYPSLHSLILIM). Residues 275–299 (GIPRVKQTCQKILWKTVCARRCWGP) lie on the Cytoplasmic side of the membrane.

Belongs to the G-protein coupled receptor T2R family.

It localises to the membrane. Functionally, receptor that may play a role in the perception of bitterness and is gustducin-linked. May play a role in sensing the chemical composition of the gastrointestinal content. The activity of this receptor may stimulate alpha gustducin, mediate PLC-beta-2 activation and lead to the gating of TRPM5. This Gorilla gorilla gorilla (Western lowland gorilla) protein is Taste receptor type 2 member 5 (TAS2R5).